The chain runs to 80 residues: Raniseptin-2 (80 aa).

Positions 1–22 are cleaved as a signal peptide; sequence MAFLKKSLFLVLFLGIVSLSIC. Positions 23 to 49 are excised as a propeptide; it reads EEEKRVGEEEEKQEEENEELSEEELRE. A disordered region spans residues 27–46; that stretch reads RVGEEEEKQEEENEELSEEE. Residues 30-44 show a composition bias toward acidic residues; the sequence is EEEEKQEEENEELSE.

This sequence belongs to the frog skin active peptide (FSAP) family. Dermaseptin subfamily. As to expression, expressed by the skin glands.

Its subcellular location is the secreted. Has antibacterial activity. This Boana raniceps (Chaco tree frog) protein is Raniseptin-2.